The following is a 751-amino-acid chain: Cytosolic neutral trehalase (751 aa).

Residues 1 to 15 (MDDSALPSNTSNGIN) show a composition bias toward polar residues. 2 disordered regions span residues 1-42 (MDDS…NPES) and 64-88 (DFHE…NPRK). Residues 64–78 (DFHEMLGDRNTRRGS) show a composition bias toward basic and acidic residues. Residues Asp105, Asp107, Asn109, Gln111, and Asp116 each coordinate Ca(2+). Substrate-binding positions include Arg292, 299–300 (WD), Asn336, 345–347 (RSQ), Glu412, Arg461, and Gly464. Catalysis depends on proton donor/acceptor residues Asp466 and Glu670.

Belongs to the glycosyl hydrolase 37 family. Ca(2+) is required as a cofactor.

Its subcellular location is the cytoplasm. The enzyme catalyses alpha,alpha-trehalose + H2O = alpha-D-glucose + beta-D-glucose. It participates in carbohydrate degradation. Its activity is regulated as follows. Activated by calcium. Hydrolyzes intracellular trehalose to glucose. The disaccharide trehalose serves as a storage carbohydrate that is mobilized during conidial germination. Regulates the level of trehalose as a protectant for cell integrity during heat stress. This is Cytosolic neutral trehalase from Emericella nidulans (strain FGSC A4 / ATCC 38163 / CBS 112.46 / NRRL 194 / M139) (Aspergillus nidulans).